Here is a 306-residue protein sequence, read N- to C-terminus: Pantothenate kinase (306 aa).

Residue Gly91–Ser98 coordinates ATP.

Belongs to the prokaryotic pantothenate kinase family.

It localises to the cytoplasm. It carries out the reaction (R)-pantothenate + ATP = (R)-4'-phosphopantothenate + ADP + H(+). It participates in cofactor biosynthesis; coenzyme A biosynthesis; CoA from (R)-pantothenate: step 1/5. The chain is Pantothenate kinase from Streptococcus pneumoniae (strain 70585).